Consider the following 60-residue polypeptide: Large ribosomal subunit protein bL32 (60 aa).

The protein belongs to the bacterial ribosomal protein bL32 family.

This is Large ribosomal subunit protein bL32 from Ruminiclostridium cellulolyticum (strain ATCC 35319 / DSM 5812 / JCM 6584 / H10) (Clostridium cellulolyticum).